The sequence spans 804 residues: Probable replication endonuclease from prophage-like region (804 aa).

Active-site O-(5'-phospho-DNA)-tyrosine intermediate residues include Y498 and Y502.

The protein belongs to the phage GPA family.

In terms of biological role, possible endonuclease which induces a single-strand cut and initiates DNA replication. In Escherichia coli O6:H1 (strain CFT073 / ATCC 700928 / UPEC), this protein is Probable replication endonuclease from prophage-like region.